Reading from the N-terminus, the 747-residue chain is Catalase-peroxidase 1 (747 aa).

A compositionally biased stretch (basic and acidic residues) spans 1-22 (MTDTSDARPPHSDDKTRSHSES). Residues 1 to 39 (MTDTSDARPPHSDDKTRSHSESENPAIDSPEPKVHAPLT) form a disordered region. A cross-link (tryptophyl-tyrosyl-methioninium (Trp-Tyr) (with M-266)) is located at residues 112 to 240 (WHAAGTYRIF…FGATTMGLIY (129 aa)). The Proton acceptor role is filled by histidine 113. The tryptophyl-tyrosyl-methioninium (Tyr-Met) (with W-112) cross-link spans 240–266 (YVNPEGPEGKPDPLAAAHDIRETFGRM). Residue histidine 281 coordinates heme b.

Belongs to the peroxidase family. Peroxidase/catalase subfamily. As to quaternary structure, homodimer or homotetramer. The cofactor is heme b. Post-translationally, formation of the three residue Trp-Tyr-Met cross-link is important for the catalase, but not the peroxidase activity of the enzyme.

It catalyses the reaction H2O2 + AH2 = A + 2 H2O. It carries out the reaction 2 H2O2 = O2 + 2 H2O. Functionally, bifunctional enzyme with both catalase and broad-spectrum peroxidase activity. This chain is Catalase-peroxidase 1, found in Mycolicibacterium vanbaalenii (strain DSM 7251 / JCM 13017 / BCRC 16820 / KCTC 9966 / NRRL B-24157 / PYR-1) (Mycobacterium vanbaalenii).